The primary structure comprises 946 residues: Bifunctional glutamine synthetase adenylyltransferase/adenylyl-removing enzyme (946 aa).

Positions 1–440 (MKPLSSPLQQ…VFNELIGDDE (440 aa)) are adenylyl removase. Residues 449–946 (SEQWRELWQD…ASWQKWLVEE (498 aa)) form an adenylyl transferase region.

This sequence belongs to the GlnE family. Mg(2+) is required as a cofactor.

The catalysed reaction is [glutamine synthetase]-O(4)-(5'-adenylyl)-L-tyrosine + phosphate = [glutamine synthetase]-L-tyrosine + ADP. It carries out the reaction [glutamine synthetase]-L-tyrosine + ATP = [glutamine synthetase]-O(4)-(5'-adenylyl)-L-tyrosine + diphosphate. Functionally, involved in the regulation of glutamine synthetase GlnA, a key enzyme in the process to assimilate ammonia. When cellular nitrogen levels are high, the C-terminal adenylyl transferase (AT) inactivates GlnA by covalent transfer of an adenylyl group from ATP to specific tyrosine residue of GlnA, thus reducing its activity. Conversely, when nitrogen levels are low, the N-terminal adenylyl removase (AR) activates GlnA by removing the adenylyl group by phosphorolysis, increasing its activity. The regulatory region of GlnE binds the signal transduction protein PII (GlnB) which indicates the nitrogen status of the cell. The protein is Bifunctional glutamine synthetase adenylyltransferase/adenylyl-removing enzyme of Shigella dysenteriae serotype 1 (strain Sd197).